The following is a 232-amino-acid chain: Phosphatidylserine decarboxylase proenzyme (232 aa).

The active-site Schiff-base intermediate with substrate; via pyruvic acid is S190. Residue S190 is modified to Pyruvic acid (Ser); by autocatalysis.

It belongs to the phosphatidylserine decarboxylase family. PSD-A subfamily. Heterodimer of a large membrane-associated beta subunit and a small pyruvoyl-containing alpha subunit. The cofactor is pyruvate. Is synthesized initially as an inactive proenzyme. Formation of the active enzyme involves a self-maturation process in which the active site pyruvoyl group is generated from an internal serine residue via an autocatalytic post-translational modification. Two non-identical subunits are generated from the proenzyme in this reaction, and the pyruvate is formed at the N-terminus of the alpha chain, which is derived from the carboxyl end of the proenzyme. The post-translation cleavage follows an unusual pathway, termed non-hydrolytic serinolysis, in which the side chain hydroxyl group of the serine supplies its oxygen atom to form the C-terminus of the beta chain, while the remainder of the serine residue undergoes an oxidative deamination to produce ammonia and the pyruvoyl prosthetic group on the alpha chain.

Its subcellular location is the cell membrane. The enzyme catalyses a 1,2-diacyl-sn-glycero-3-phospho-L-serine + H(+) = a 1,2-diacyl-sn-glycero-3-phosphoethanolamine + CO2. It functions in the pathway phospholipid metabolism; phosphatidylethanolamine biosynthesis; phosphatidylethanolamine from CDP-diacylglycerol: step 2/2. Its function is as follows. Catalyzes the formation of phosphatidylethanolamine (PtdEtn) from phosphatidylserine (PtdSer). Important for establishment of root nodule symbiosis with the host plant. This chain is Phosphatidylserine decarboxylase proenzyme, found in Rhizobium meliloti (strain 1021) (Ensifer meliloti).